A 408-amino-acid chain; its full sequence is Neutral cholesterol ester hydrolase 1 (408 aa).

Residues 1-4 (MRSS) lie on the Cytoplasmic side of the membrane. Residues 5-25 (CVLLAALLALAAYYVYIPLPS) traverse the membrane as a helical; Signal-anchor for type II membrane protein segment. The Lumenal segment spans residues 26–408 (AVSDPWKLML…SYIKWLDQNL (383 aa)). The Involved in the stabilization of the negatively charged intermediate by the formation of the oxyanion hole motif lies at 113–115 (HGG). S191 is an active-site residue. N270 carries an N-linked (GlcNAc...) asparagine glycan. D348 is an active-site residue. Residue N367 is glycosylated (N-linked (GlcNAc...) asparagine). The active site involves H378. N389 is a glycosylation site (N-linked (GlcNAc...) asparagine).

This sequence belongs to the 'GDXG' lipolytic enzyme family. In terms of processing, N-glycosylated. Present in brain, heart, kidney, lung, spinal cord and testis but not liver (at protein level). Expressed in peritoneal macrophages and kidney.

The protein localises to the cell membrane. Its subcellular location is the microsome. It catalyses the reaction a 1-O-alkyl-2-acetyl-sn-glycerol + H2O = a 1-O-alkyl-sn-glycerol + acetate + H(+). It carries out the reaction 1-O-hexadecyl-2-acetyl-sn-glycerol + H2O = 1-O-hexadecyl-sn-glycerol + acetate + H(+). The catalysed reaction is a cholesterol ester + H2O = cholesterol + a fatty acid + H(+). The enzyme catalyses cholesteryl (9Z-octadecenoate) + H2O = cholesterol + (9Z)-octadecenoate + H(+). Its activity is regulated as follows. Inhibited by bulky trifluoromethyl ketones. Hydrolyzes 2-acetyl monoalkylglycerol ether (1-O-alkyl-2-acetyl-sn-glycerol), the penultimate precursor of the pathway for de novo synthesis of platelet-activating factor. May be responsible for the hydrolysis of cholesterol esters (such as cholesteryl (9Z-octadecenoate)) in macrophages. Also involved in organ detoxification by hydrolyzing exogenous organophosphorus compounds. The polypeptide is Neutral cholesterol ester hydrolase 1 (Nceh1) (Mus musculus (Mouse)).